We begin with the raw amino-acid sequence, 222 residues long: Interleukin-12 subunit alpha (222 aa).

The first 25 residues, 1–25 (MCPLRNLLLVATLVLLNHLDHLSLG), serve as a signal peptide directing secretion. Disulfide bonds link Cys40–Cys113, Cys67–Cys199, and Cys88–Cys126. Asn42 and Asn96 each carry an N-linked (GlcNAc...) asparagine glycan.

The protein belongs to the IL-6 superfamily. Heterodimer with IL12B; disulfide-linked. This heterodimer is known as interleukin IL-12. Heterodimer with EBI3/IL27B; not disulfide-linked. This heterodimer is known as interleukin IL-35. Interacts with NBR1; this interaction promotes IL-12 secretion.

It is found in the secreted. Functionally, heterodimerizes with IL12B to form the IL-12 cytokine or with EBI3/IL27B to form the IL-35 cytokine. IL-12 is primarily produced by professional antigen-presenting cells (APCs) such as B-cells and dendritic cells (DCs) as well as macrophages and granulocytes and regulates T-cell and natural killer-cell responses, induces the production of interferon-gamma (IFN-gamma), favors the differentiation of T-helper 1 (Th1) cells and is an important link between innate resistance and adaptive immunity. Mechanistically, exerts its biological effects through a receptor composed of IL12R1 and IL12R2 subunits. Binding to the receptor results in the rapid tyrosine phosphorylation of a number of cellular substrates including the JAK family kinases TYK2 and JAK2. In turn, recruited STAT4 gets phosphorylated and translocates to the nucleus where it regulates cytokine/growth factor responsive genes. As part of IL-35, plays essential roles in maintaining the immune homeostasis of the liver microenvironment and also functions as an immune-suppressive cytokine. Mediates biological events through unconventional receptors composed of IL12RB2 and gp130/IL6ST heterodimers or homodimers. Signaling requires the transcription factors STAT1 and STAT4, which form a unique heterodimer that binds to distinct DNA sites. The polypeptide is Interleukin-12 subunit alpha (IL12A) (Sus scrofa (Pig)).